Here is a 458-residue protein sequence, read N- to C-terminus: MGSSNLNINSKITDIFAYQVFDSRGVPTVACVVKLASGHVGEAMVPSGASTGEKEAIELRDNDPKNYFGKGVNEAVDNVNKVIAPKLIGLNAFDQLTVDQAMIKLDNTPNKAKLGANAILSVSLAVSKAAAKAQNSSLFQYISNKLIGLNTTNFVLPVPMLNVINGGAHADNYIDFQEFMIMPLGAKKMHEALKMASETFHALQNLLKKRGLNTNKGDEGGFAPNLKLAEDALDIMVEAIKLAGYKPWDDIAIAIDVAASEFYDEDKKLYVFKKGIKANILNAKDWSLTSKEMIAYLEKLTKKYPIISIEDGLSENDWEGMNQLTKTIGSHIQIVGDDTYCTNAELAKKGVAQNTTNSILIKLNQIGSISETIQTIEVAKKANWSQVISHRSGETEDTTIADLAVAAQTGQIKTGSMSRSERIAKYNRLLYIEIELGDKGKYLGWNTFTNIKPKNFNI.

Q177 is a binding site for (2R)-2-phosphoglycerate. Catalysis depends on E219, which acts as the Proton donor. D256, E310, and D337 together coordinate Mg(2+). Residues K362, R391, S392, and K413 each contribute to the (2R)-2-phosphoglycerate site. K362 acts as the Proton acceptor in catalysis.

It belongs to the enolase family. The cofactor is Mg(2+).

The protein resides in the cytoplasm. It is found in the secreted. Its subcellular location is the cell surface. The enzyme catalyses (2R)-2-phosphoglycerate = phosphoenolpyruvate + H2O. The protein operates within carbohydrate degradation; glycolysis; pyruvate from D-glyceraldehyde 3-phosphate: step 4/5. Its function is as follows. Catalyzes the reversible conversion of 2-phosphoglycerate (2-PG) into phosphoenolpyruvate (PEP). It is essential for the degradation of carbohydrates via glycolysis. The sequence is that of Enolase from Mycoplasma genitalium (strain ATCC 33530 / DSM 19775 / NCTC 10195 / G37) (Mycoplasmoides genitalium).